The chain runs to 1228 residues: AT-rich interactive domain-containing protein 4B (1228 aa).

Disordered regions lie at residues 123-167 (LPLT…DDRK) and 266-307 (KTEL…PFPE). Residues Ser-276, Ser-295, and Ser-296 each carry the phosphoserine modification. Positions 277 to 305 (EAEEEEEEEDDEKEKEDNSSEEEEEIEPF) are enriched in acidic residues. The 93-residue stretch at 306–398 (PEERENFLQQ…YLYGFEEYCR (93 aa)) folds into the ARID domain. Glycyl lysine isopeptide (Lys-Gly) (interchain with G-Cter in SUMO2) cross-links involve residues Lys-428 and Lys-461. Over residues 437–464 (EVNVEDSKNMIPKEETPAEDESERKENI) the composition is skewed to basic and acidic residues. 6 disordered regions span residues 437-466 (EVNV…NIKP), 479-525 (PAQS…EQAR), 539-606 (RPAD…SDTG), 620-802 (LQAS…EEKR), 825-1129 (LNNS…RLPK), and 1168-1204 (SEVA…SITA). Ser-482 is modified (phosphoserine). The span at 483-511 (DQEKEANITKLEEKESLEDKDGATARAEE) shows a compositional bias: basic and acidic residues. Residues 546-555 (PKIKHRKKIK) show a composition bias toward basic residues. A compositionally biased stretch (basic and acidic residues) spans 556–569 (NKLDKEKDRDEKYS). 3 positions are modified to phosphoserine: Ser-579, Ser-581, and Ser-588. The segment covering 596–606 (DLADAKNSDTG) has biased composition (basic and acidic residues). Ser-630 is subject to Phosphoserine. 2 stretches are compositionally biased toward basic and acidic residues: residues 635–667 (ERCA…KEEL) and 691–700 (SPERLRKDVE). Lys-664 participates in a covalent cross-link: Glycyl lysine isopeptide (Lys-Gly) (interchain with G-Cter in SUMO2). Phosphoserine is present on residues Ser-691 and Ser-703. Positions 701-713 (AISEDTDFEEEDE) are enriched in acidic residues. Thr-706 bears the Phosphothreonine mark. Residues 721-730 (VKKDTTDKAL) show a composition bias toward basic and acidic residues. The segment covering 744-753 (IQTNCLQSGS) has biased composition (polar residues). 3 stretches are compositionally biased toward basic and acidic residues: residues 755-765 (GKKEDRTKSKE), 825-843 (LNNS…RKDV), and 911-926 (KPVE…RKTE). The segment covering 927–937 (FPSSGSNSVLN) has biased composition (polar residues). Position 930 is a phosphoserine (Ser-930). Thr-942 bears the Phosphothreonine mark. Low complexity predominate over residues 944 to 965 (ESPSSVTVTETSQQQSSVTVSV). Residue Ser-945 is modified to Phosphoserine. A compositionally biased stretch (basic and acidic residues) spans 972–981 (EEVRSIKSET). Low complexity predominate over residues 1003–1017 (SSPAGFNASVSSSSS). Residues 1046–1064 (KKQKRSHKATVVNNKKKGK) show a composition bias toward basic residues. The residue at position 1066 (Thr-1066) is a Phosphothreonine. Residues Ser-1068, Ser-1069, Ser-1071, and Ser-1075 each carry the phosphoserine modification. Residues 1112-1124 (KNGDKDPDLKEPS) are compositionally biased toward basic and acidic residues. Positions 1141–1186 (ENMTSAERISILQEKLQEIRKHYLSLKSEVASIDRRRKRLKKKERE) form a coiled coil. Residues 1188 to 1204 (AATSSSSSSPSSSSITA) show a composition bias toward low complexity.

Component of a Sin3A corepressor complex consisting of SIN3A, SAP130, SUDS3/SAP45, SAP180, HDAC1 and HDAC2. Interacts with ARID4A. Interacts with AR.

The protein resides in the nucleus. Its function is as follows. Acts as a transcriptional repressor. May function in the assembly and/or enzymatic activity of the Sin3A corepressor complex or in mediating interactions between the complex and other regulatory complexes. Plays a role in the regulation of epigenetic modifications at the PWS/AS imprinting center near the SNRPN promoter, where it might function as part of a complex with RB1 and ARID4A. Involved in spermatogenesis, together with ARID4A, where it functions as a transcriptional coactivator for AR (androgen receptor) and enhances expression of genes required for sperm maturation. Regulates expression of the tight junction protein CLDN3 in the testis, which is important for integrity of the blood-testis barrier. Plays a role in myeloid homeostasis where it regulates the histone methylation state of bone marrow cells and expression of various genes involved in hematopoiesis. May function as a leukemia suppressor. The sequence is that of AT-rich interactive domain-containing protein 4B (Arid4b) from Rattus norvegicus (Rat).